Reading from the N-terminus, the 350-residue chain is Small ribosomal subunit biogenesis GTPase RsgA (350 aa).

The interval M1–K30 is disordered. A compositionally biased stretch (polar residues) spans T7–K20. The span at T21–K30 shows a compositional bias: basic residues. In terms of domain architecture, CP-type G spans H106 to F274. Residues N162 to D165 and G216 to S224 contribute to the GTP site. Zn(2+) contacts are provided by C298, C303, H305, and C311.

Belongs to the TRAFAC class YlqF/YawG GTPase family. RsgA subfamily. In terms of assembly, monomer. Associates with 30S ribosomal subunit, binds 16S rRNA. The cofactor is Zn(2+).

The protein resides in the cytoplasm. Functionally, one of several proteins that assist in the late maturation steps of the functional core of the 30S ribosomal subunit. Helps release RbfA from mature subunits. May play a role in the assembly of ribosomal proteins into the subunit. Circularly permuted GTPase that catalyzes slow GTP hydrolysis, GTPase activity is stimulated by the 30S ribosomal subunit. The sequence is that of Small ribosomal subunit biogenesis GTPase RsgA from Histophilus somni (strain 129Pt) (Haemophilus somnus).